We begin with the raw amino-acid sequence, 526 residues long: tRNA (guanine(26)-N(2))-dimethyltransferase (526 aa).

Over residues 1-10 (MTENVNSSGD) the composition is skewed to polar residues. Residues 1 to 20 (MTENVNSSGDSAIKSEDKEE) form a disordered region. The Trm1 methyltransferase domain occupies 22–441 (TVIQEGQAKV…APMHLLWDIY (420 aa)). Arg-47, Arg-104, and Asp-122 together coordinate S-adenosyl-L-methionine. Positions 286, 289, 325, and 328 each coordinate Zn(2+). The tract at residues 498–526 (KGKNWGPRQKAKGSVNSTKAGFQLTEHKE) is disordered.

It belongs to the class I-like SAM-binding methyltransferase superfamily. Trm1 family.

It carries out the reaction guanosine(26) in tRNA + 2 S-adenosyl-L-methionine = N(2)-dimethylguanosine(26) in tRNA + 2 S-adenosyl-L-homocysteine + 2 H(+). Dimethylates a single guanine residue at position 26 of most tRNAs using S-adenosyl-L-methionine as donor of the methyl groups. This is tRNA (guanine(26)-N(2))-dimethyltransferase (trm-1) from Caenorhabditis elegans.